The following is a 1914-amino-acid chain: Diacylglycerol kinase eta (1914 aa).

Over residues 1 to 10 (MSHLKLDTLH) the composition is skewed to basic and acidic residues. The interval 1–37 (MSHLKLDTLHVQRSPRGSRRSSRSSGRSSACSSGSIS) is disordered. Positions 23–37 (RSSGRSSACSSGSIS) are enriched in low complexity. One can recognise a PH domain in the interval 82 to 175 (AIIKEGFLLK…WLGSLKTATA (94 aa)). 2 Phorbol-ester/DAG-type zinc fingers span residues 195–245 (HHHW…IANC) and 268–319 (PHQW…AVAC). Residues 350–486 (GNFSPLLVFV…DRWSIMVFEK (137 aa)) form the DAGKc domain. 5 disordered regions span residues 621–642 (EKDQINSKERRNSRSLRSSEKE), 783–805 (GANIDDAGNRLSPCSDGGENTPT), 1016–1053 (TLCSEHVGPPKPPRKKSLSALSRTQAHPRRRNSSPPRI), 1116–1135 (QHRGGDNDSEYPEHQQTPTN), and 1175–1216 (PNTI…TVSL). A compositionally biased stretch (polar residues) spans 1175-1187 (PNTILTTSTSPTK). The SAM domain occupies 1851–1914 (WSVNEVVTWL…LQAIKDLSEN (64 aa)).

The protein belongs to the eukaryotic diacylglycerol kinase family.

The protein localises to the cytoplasm. The catalysed reaction is a 1,2-diacyl-sn-glycerol + ATP = a 1,2-diacyl-sn-glycero-3-phosphate + ADP + H(+). In terms of biological role, phosphorylates diacylglycerol (DAG) to generate phosphatidic acid (PA). In Drosophila sechellia (Fruit fly), this protein is Diacylglycerol kinase eta.